Consider the following 239-residue polypeptide: 2-C-methyl-D-erythritol 4-phosphate cytidylyltransferase (239 aa).

It belongs to the IspD/TarI cytidylyltransferase family. IspD subfamily.

The enzyme catalyses 2-C-methyl-D-erythritol 4-phosphate + CTP + H(+) = 4-CDP-2-C-methyl-D-erythritol + diphosphate. Its pathway is isoprenoid biosynthesis; isopentenyl diphosphate biosynthesis via DXP pathway; isopentenyl diphosphate from 1-deoxy-D-xylulose 5-phosphate: step 2/6. Its function is as follows. Catalyzes the formation of 4-diphosphocytidyl-2-C-methyl-D-erythritol from CTP and 2-C-methyl-D-erythritol 4-phosphate (MEP). The protein is 2-C-methyl-D-erythritol 4-phosphate cytidylyltransferase of Ruthia magnifica subsp. Calyptogena magnifica.